The sequence spans 107 residues: Nucleoid-associated protein GOX0603 (107 aa).

Belongs to the YbaB/EbfC family. Homodimer.

It localises to the cytoplasm. Its subcellular location is the nucleoid. Its function is as follows. Binds to DNA and alters its conformation. May be involved in regulation of gene expression, nucleoid organization and DNA protection. The protein is Nucleoid-associated protein GOX0603 of Gluconobacter oxydans (strain 621H) (Gluconobacter suboxydans).